The primary structure comprises 361 residues: Molybdenum import ATP-binding protein ModC (361 aa).

The ABC transporter domain occupies 1–228; that stretch reads MLNINIEKQL…EQMRPWVPLQ (228 aa). Residue 31 to 38 coordinates ATP; it reads GRSGAGKT. The region spanning 289–356 is the Mop domain; the sequence is GSSVRNLLRG…IKGVTMTQMD (68 aa).

It belongs to the ABC transporter superfamily. Molybdate importer (TC 3.A.1.8) family. In terms of assembly, the complex is composed of two ATP-binding proteins (ModC), two transmembrane proteins (ModB) and a solute-binding protein (ModA).

Its subcellular location is the cell inner membrane. The catalysed reaction is molybdate(out) + ATP + H2O = molybdate(in) + ADP + phosphate + H(+). Part of the ABC transporter complex ModABC involved in molybdenum import. Responsible for energy coupling to the transport system. This Shewanella sp. (strain MR-7) protein is Molybdenum import ATP-binding protein ModC.